A 350-amino-acid chain; its full sequence is Xylene/toluene monooxygenase electron transfer component XylA (350 aa).

In terms of domain architecture, 2Fe-2S ferredoxin-type spans Pro16–Leu108. Cys52, Cys57, Cys60, and Cys92 together coordinate [2Fe-2S] cluster. The segment at Gly109 to Cys350 is ferredoxin--NADH reductase. The FAD-binding FR-type domain occupies Pro114–His213.

It belongs to the bacterial ring-hydroxylating dioxygenase ferredoxin reductase family. As to quaternary structure, monomer. The xylene/toluene monooxygenase is composed of two subunits: the electron transfer component XylA and the hydroxylase component XylM. Requires FAD as cofactor. [2Fe-2S] cluster is required as a cofactor.

The protein localises to the cell inner membrane. The enzyme catalyses 2 reduced [2Fe-2S]-[ferredoxin] + NAD(+) + H(+) = 2 oxidized [2Fe-2S]-[ferredoxin] + NADH. Its activity is regulated as follows. The reductase activity is completely inhibited by quercetin (a common inhibitor of mammalian oxidoreductases) and p-chloromercuribenzoate, but not by iodoacetimide, N-ethylmaleimide and pyrrazole. Functionally, component of a monooxygenase that catalyzes the first step in the degradation of xylenes and toluenes. XylA is responsible for the transport of electrons from the electron donor NADH to the terminal hydroxylase component, XylM. This is Xylene/toluene monooxygenase electron transfer component XylA from Pseudomonas putida (Arthrobacter siderocapsulatus).